The primary structure comprises 225 residues: MDKRISIAIDGPAAAGKSTVAKVVAKELSYVYIDTGAMYRTLTYAALEQKVDIENEEQLMEVVRNVNIEFQQGENTQLVFLNGQDVSEVIRTPDVTNRVSIVAKHRLVREEMVRRQQDLAKKGGVVMDGRDIGTHVLPDAEVKIFMLASVEERAERRHLENLNKGFDSNLEQLKEEIAQRDKLDSEREVSPLKKADDALELDTTSLSIEEVVQKIMSIVSGVFAK.

Position 11–19 (11–19) interacts with ATP; that stretch reads GPAAAGKST.

It belongs to the cytidylate kinase family. Type 1 subfamily.

The protein localises to the cytoplasm. The enzyme catalyses CMP + ATP = CDP + ADP. It carries out the reaction dCMP + ATP = dCDP + ADP. This Bacillus cereus (strain G9842) protein is Cytidylate kinase.